The chain runs to 670 residues: DNA ligase (670 aa).

NAD(+) contacts are provided by residues 32 to 36 (DSEYD), 81 to 82 (SL), and Glu114. The active-site N6-AMP-lysine intermediate is the Lys116. NAD(+) contacts are provided by Arg137, Glu174, Lys291, and Lys315. Zn(2+)-binding residues include Cys409, Cys412, Cys427, and Cys433. Residues 592–670 (ASENLFKDKT…EEEFLAQITR (79 aa)) form the BRCT domain.

This sequence belongs to the NAD-dependent DNA ligase family. LigA subfamily. Mg(2+) serves as cofactor. It depends on Mn(2+) as a cofactor.

It catalyses the reaction NAD(+) + (deoxyribonucleotide)n-3'-hydroxyl + 5'-phospho-(deoxyribonucleotide)m = (deoxyribonucleotide)n+m + AMP + beta-nicotinamide D-nucleotide.. In terms of biological role, DNA ligase that catalyzes the formation of phosphodiester linkages between 5'-phosphoryl and 3'-hydroxyl groups in double-stranded DNA using NAD as a coenzyme and as the energy source for the reaction. It is essential for DNA replication and repair of damaged DNA. The sequence is that of DNA ligase from Haemophilus influenzae (strain ATCC 51907 / DSM 11121 / KW20 / Rd).